A 180-amino-acid chain; its full sequence is Nucleoside triphosphate/diphosphate phosphatase (180 aa).

Catalysis depends on Arg26, which acts as the Proton donor. Positions 90, 106, 108, 110, 123, and 126 each coordinate Mg(2+).

Belongs to the Ntdp family. Mg(2+) is required as a cofactor.

The enzyme catalyses a ribonucleoside 5'-triphosphate + H2O = a ribonucleoside 5'-diphosphate + phosphate + H(+). The catalysed reaction is a ribonucleoside 5'-diphosphate + H2O = a ribonucleoside 5'-phosphate + phosphate + H(+). Its function is as follows. Has nucleoside phosphatase activity towards nucleoside triphosphates and nucleoside diphosphates. This chain is Nucleoside triphosphate/diphosphate phosphatase, found in Staphylococcus saprophyticus subsp. saprophyticus (strain ATCC 15305 / DSM 20229 / NCIMB 8711 / NCTC 7292 / S-41).